A 382-amino-acid polypeptide reads, in one-letter code: Galactokinase (382 aa).

34–37 contributes to the substrate binding site; that stretch reads EHTD. An ATP-binding site is contributed by 124-130; that stretch reads GAGLSSS. Mg(2+)-binding residues include Ser130 and Glu162. Asp174 acts as the Proton acceptor in catalysis. A substrate-binding site is contributed by Tyr223.

The protein belongs to the GHMP kinase family. GalK subfamily.

It localises to the cytoplasm. It catalyses the reaction alpha-D-galactose + ATP = alpha-D-galactose 1-phosphate + ADP + H(+). Its pathway is carbohydrate metabolism; galactose metabolism. Functionally, catalyzes the transfer of the gamma-phosphate of ATP to D-galactose to form alpha-D-galactose-1-phosphate (Gal-1-P). The protein is Galactokinase of Escherichia coli O17:K52:H18 (strain UMN026 / ExPEC).